The following is a 374-amino-acid chain: Ribonuclease D (374 aa).

The region spanning Tyr3–Thr171 is the 3'-5' exonuclease domain. The 80-residue stretch at Lys210 to Glu289 folds into the HRDC domain.

It belongs to the RNase D family. Requires a divalent metal cation as cofactor.

Its subcellular location is the cytoplasm. The enzyme catalyses Exonucleolytic cleavage that removes extra residues from the 3'-terminus of tRNA to produce 5'-mononucleotides.. Functionally, exonuclease involved in the 3' processing of various precursor tRNAs. Initiates hydrolysis at the 3'-terminus of an RNA molecule and releases 5'-mononucleotides. This chain is Ribonuclease D, found in Musicola paradisiaca (strain Ech703) (Dickeya paradisiaca).